The following is a 2346-amino-acid chain: Nucleoprotein TPR (2346 aa).

Coiled-coil stretches lie at residues 38–190 (DEYC…HKEI), 217–366 (QLQS…NLES), 395–493 (YAKS…SRQV), and 565–596 (KMLL…NNTV). The interval 622–649 (VDLDDSNLEPNDSALDTSEQPAANFEES) is disordered. The span at 629–642 (LEPNDSALDTSEQP) shows a compositional bias: polar residues. Coiled-coil stretches lie at residues 643 to 1158 (AANF…IEAL) and 1196 to 1247 (EEGR…DELN). Residues 1187–1655 (LNASGLTAAE…SPRTANVKPM (469 aa)) are interacts with Mad1. 4 positions are modified to phosphothreonine: T1259, T1302, T1338, and T1390. 2 coiled-coil regions span residues 1281 to 1536 (TDSN…KRTE) and 1579 to 1627 (SYDE…GSQQ). Polar residues-rich tracts occupy residues 1621–1649 (RQLG…SPRT) and 1657–1667 (GSATVQQSATV). Disordered regions lie at residues 1621-1677 (RQLG…ETPL), 1695-1768 (PTSQ…YMPS), and 1821-2346 (SPRV…GRFP). The span at 1702–1722 (AGSSTSTSSSSSSSSTSTTSA) shows a compositional bias: low complexity. The segment covering 1738-1747 (PQQQVHTTGS) has biased composition (polar residues). Low complexity-rich tracts occupy residues 1752–1761 (SMASSSPTSS) and 1827–1878 (SSSS…PSSS). Polar residues predominate over residues 1879–1891 (NVTTTQAGCSSQG). Residues 1953–2023 (QEDDIQVVDS…QDNNEVDIEV (71 aa)) are compositionally biased toward acidic residues. The segment covering 2028-2080 (MQAQEESQSLDNQAIATASASTQENNQSQAITSGSGESSNPVTLPQAEASNWK) has biased composition (polar residues). A compositionally biased stretch (low complexity) spans 2082–2091 (AAASTSTAAA). 2 stretches are compositionally biased toward polar residues: residues 2097 to 2110 (SVEI…SNFC) and 2142 to 2159 (GAAS…GESS). Over residues 2165 to 2184 (KAADDGGDHADGTDNAREAD) the composition is skewed to basic and acidic residues. Polar residues-rich tracts occupy residues 2193–2223 (ATGQ…NQAN) and 2302–2322 (RDTS…NRFA). Basic residues predominate over residues 2323–2332 (QRTRNRRPIR).

This sequence belongs to the TPR family. Part of the nuclear pore complex (NPC). Associates with male-specific lethal (MSL) histone acetyltransferase complex. Interacts with Mad2; the interaction is required for efficient recruitment of Mad2 to unattached kinetochore and occurs in a microtubule-independent manner. Interacts with Mad1 (N-terminus). Interacts with Chro, east and Asator; the interaction is part of a macromolecular complex forming the spindle matrix during mitosis. Interacts with Nup98. In males, interacts with histone acetyltransferase mof. Post-translationally, mps1-mediated phosphorylation disrupts interaction with Mad1 during mitosis. In terms of tissue distribution, expressed in salivary glands, fat body, tracheal tube, esophageal tube and anterior ejaculatory duct (at protein level).

Its subcellular location is the nucleus. It is found in the nucleus matrix. The protein resides in the nucleus lamina. It localises to the nucleus envelope. The protein localises to the nucleus membrane. Its subcellular location is the nuclear pore complex. It is found in the cytoplasm. The protein resides in the cytoskeleton. It localises to the spindle. The protein localises to the chromosome. Its subcellular location is the centromere. It is found in the kinetochore. The protein resides in the midbody. Its function is as follows. Component of the nuclear pore complex (NPC), a complex required for the trafficking across the nuclear envelope. Functions as a scaffolding element in the nuclear phase of the NPC. Plays a role in chromosomal organization and gene expression regulation; stimulates transcription by promoting the formation of an open chromatin environment. Binds chromatin to nucleoporin-associated regions (NARs) that define transcriptionally active regions of the genome. Associates with extended chromosomal regions that alternate between domains of high density binding with those of low occupancy. Preferentially binds to NARs of the male X chromosome. In males, together with Nup153, required for the localization of the male-specific lethal (MSL) histone acetyltransferase complex to the X chromosome and therefore for the transcription of dosage compensation genes. In males, restrains dosage-compensated expression at the level of nascent transcription probably by interacting with the MSL complex and by modulating RNA Polymerase II phosphorylation status and activity. During mitosis forms a gel-like spindle matrix complex together with Skeletor (Skel), Chro, east, and Asator embedding the microtubule spindle apparatus. During interphase localizes Mad1 to the nuclear pore complex and thereby might act as a scaffold to assemble the Mad1-C-Mad2 complex, a heterotetramer that catalyzes the structural conversion of open-Mad2 (O-Mad2) into closed-Mad2 (C-Mad2) which is essential for spindle-assembly checkpoint (SAC). During the metaphase-anaphase transition and before chromosome congression, is phosphorylated by Msp-1; this modification releases Mad1 from the nuclear pore complex and thereby promotes assembly of SAC ensuring a timely and effective recruitment of spindle checkpoint proteins like Mad1, Mad2 and Mps1 to unattached kinetochores (KT). In testes, has a role in stem cell asymmetric division and maintenance via regulation of mitotic spindle assembly checkpoint (SAC) complex. This Drosophila melanogaster (Fruit fly) protein is Nucleoprotein TPR.